The sequence spans 880 residues: Alanine--tRNA ligase (880 aa).

The Zn(2+) site is built by His567, His571, Cys669, and His673.

It belongs to the class-II aminoacyl-tRNA synthetase family. It depends on Zn(2+) as a cofactor.

Its subcellular location is the cytoplasm. It carries out the reaction tRNA(Ala) + L-alanine + ATP = L-alanyl-tRNA(Ala) + AMP + diphosphate. Its function is as follows. Catalyzes the attachment of alanine to tRNA(Ala) in a two-step reaction: alanine is first activated by ATP to form Ala-AMP and then transferred to the acceptor end of tRNA(Ala). Also edits incorrectly charged Ser-tRNA(Ala) and Gly-tRNA(Ala) via its editing domain. The chain is Alanine--tRNA ligase from Bacillus thuringiensis subsp. konkukian (strain 97-27).